A 202-amino-acid chain; its full sequence is Proteasome subunit beta 1 (202 aa).

The propeptide at 1–8 is removed in mature form; by autocatalysis; that stretch reads MGEVVLPG. Threonine 9 serves as the catalytic Nucleophile.

It belongs to the peptidase T1B family. As to quaternary structure, the 20S proteasome core is composed of 14 alpha and 14 beta subunits that assemble into four stacked heptameric rings, resulting in a barrel-shaped structure. The two inner rings, each composed of seven catalytic beta subunits, are sandwiched by two outer rings, each composed of seven alpha subunits. The catalytic chamber with the active sites is on the inside of the barrel. Has a gated structure, the ends of the cylinder being occluded by the N-termini of the alpha-subunits. Is capped at one or both ends by the proteasome regulatory ATPase, PAN.

The protein localises to the cytoplasm. The catalysed reaction is Cleavage of peptide bonds with very broad specificity.. Its activity is regulated as follows. The formation of the proteasomal ATPase PAN-20S proteasome complex, via the docking of the C-termini of PAN into the intersubunit pockets in the alpha-rings, triggers opening of the gate for substrate entry. Interconversion between the open-gate and close-gate conformations leads to a dynamic regulation of the 20S proteasome proteolysis activity. Its function is as follows. Component of the proteasome core, a large protease complex with broad specificity involved in protein degradation. The polypeptide is Proteasome subunit beta 1 (Desulfurococcus amylolyticus (strain DSM 18924 / JCM 16383 / VKM B-2413 / 1221n) (Desulfurococcus kamchatkensis)).